The following is a 1123-amino-acid chain: Alpha-mannosidase E (1123 aa).

The first 21 residues, 1–21, serve as a signal peptide directing secretion; sequence MNKTKLIKIIFVIGVWILLST. 2 N-linked (GlcNAc...) asparagine glycosylation sites follow: N2 and N38. Residues 22–1072 lie on the Extracellular side of the membrane; the sequence is FIINIYNENF…KYNRPNHLAL (1051 aa). Zn(2+) is bound by residues H67 and D69. Residue N140 is glycosylated (N-linked (GlcNAc...) asparagine). D150 and H409 together coordinate Zn(2+). D150 (nucleophile) is an active-site residue. Residues N521, N675, N858, N887, N975, and N990 are each glycosylated (N-linked (GlcNAc...) asparagine). The chain crosses the membrane as a helical span at residues 1073 to 1093; that stretch reads ILSLSIGTPAGILIIVIALVV. Residues 1094–1123 are Cytoplasmic-facing; sequence IYKKRKNRKTLTSSYSLLNLILKDRADSSP.

This sequence belongs to the glycosyl hydrolase 38 family. Requires Zn(2+) as cofactor.

It is found in the membrane. The enzyme catalyses Hydrolysis of terminal, non-reducing alpha-D-mannose residues in alpha-D-mannosides.. This is Alpha-mannosidase E (manE) from Dictyostelium discoideum (Social amoeba).